A 207-amino-acid chain; its full sequence is Crossover junction endodeoxyribonuclease RuvC (207 aa).

Catalysis depends on residues Asp-11, Glu-71, and Asp-143. Residues Asp-11, Glu-71, and Asp-143 each coordinate Mg(2+).

The protein belongs to the RuvC family. Homodimer which binds Holliday junction (HJ) DNA. The HJ becomes 2-fold symmetrical on binding to RuvC with unstacked arms; it has a different conformation from HJ DNA in complex with RuvA. In the full resolvosome a probable DNA-RuvA(4)-RuvB(12)-RuvC(2) complex forms which resolves the HJ. Mg(2+) is required as a cofactor.

The protein resides in the cytoplasm. The catalysed reaction is Endonucleolytic cleavage at a junction such as a reciprocal single-stranded crossover between two homologous DNA duplexes (Holliday junction).. The RuvA-RuvB-RuvC complex processes Holliday junction (HJ) DNA during genetic recombination and DNA repair. Endonuclease that resolves HJ intermediates. Cleaves cruciform DNA by making single-stranded nicks across the HJ at symmetrical positions within the homologous arms, yielding a 5'-phosphate and a 3'-hydroxyl group; requires a central core of homology in the junction. The consensus cleavage sequence is 5'-(A/T)TT(C/G)-3'. Cleavage occurs on the 3'-side of the TT dinucleotide at the point of strand exchange. HJ branch migration catalyzed by RuvA-RuvB allows RuvC to scan DNA until it finds its consensus sequence, where it cleaves and resolves the cruciform DNA. This chain is Crossover junction endodeoxyribonuclease RuvC, found in Methylobacterium radiotolerans (strain ATCC 27329 / DSM 1819 / JCM 2831 / NBRC 15690 / NCIMB 10815 / 0-1).